We begin with the raw amino-acid sequence, 216 residues long: Adenylate kinase (216 aa).

10–15 is an ATP binding site; that stretch reads GAGKGT. Residues 30–59 are NMP; the sequence is STGDMLRAAVKAGTELGIKAKSIMDAGGLV. Residues Thr31, Arg36, 57–59, 85–88, and Gln92 contribute to the AMP site; these read GLV and GFPR. Residues 122 to 159 are LID; the sequence is GRRVHEASGRVYHIVYNPPKIAGKDDITGEELVQRKDD. Residues Arg123 and 132 to 133 contribute to the ATP site; that span reads VY. Residues Arg156 and Arg167 each coordinate AMP. Gly202 is an ATP binding site.

It belongs to the adenylate kinase family. Monomer.

It localises to the cytoplasm. It catalyses the reaction AMP + ATP = 2 ADP. Its pathway is purine metabolism; AMP biosynthesis via salvage pathway; AMP from ADP: step 1/1. Catalyzes the reversible transfer of the terminal phosphate group between ATP and AMP. Plays an important role in cellular energy homeostasis and in adenine nucleotide metabolism. In Pseudomonas fluorescens (strain Pf0-1), this protein is Adenylate kinase.